The chain runs to 2412 residues: Centrosomal protein of 295 kDa (2412 aa).

The segment at Met-1–Cys-540 is necessary for centriole targeting and microtubule association. Ser-13 bears the Phosphoserine mark. Coiled coils occupy residues Ala-63–Leu-84, Ala-114–Gln-134, Asp-209–Arg-273, Arg-489–Gln-535, and His-563–Glu-592. Disordered regions lie at residues Ser-600 to Val-641 and Leu-739 to Phe-762. The residue at position 634 (Ser-634) is a Phosphoserine. Positions Leu-739–Ser-757 are enriched in polar residues. A coiled-coil region spans residues Ala-811–Leu-841. Disordered regions lie at residues Ser-871–Ser-891, Asp-973–Ser-1005, Leu-1158–Ser-1178, and Trp-1216–Gly-1240. Composition is skewed to polar residues over residues Pro-993–Ser-1005, Leu-1158–Val-1176, and Phe-1224–Gly-1240. 2 coiled-coil regions span residues Gln-1300–Glu-1327 and Gln-1448–Ile-1493. A Phosphoserine modification is found at Ser-1573. Disordered regions lie at residues Leu-1820 to Val-1895, Glu-1916 to Asp-1937, Asp-2028 to Ser-2048, and Thr-2089 to Ala-2111. Positions Ser-1836–Ala-1868 are enriched in basic and acidic residues. Over residues Gln-1885–Val-1895 the composition is skewed to polar residues. Residues Gln-1921–Glu-1935 are compositionally biased toward basic and acidic residues. Residues Thr-2089–Ser-2108 show a composition bias toward polar residues. The ALMS motif stretch occupies residues Ser-2367–Ser-2412.

Interacts (via ALMS motif) with microtubules; this interaction is direct.

The protein resides in the cytoplasm. The protein localises to the cytoskeleton. Its subcellular location is the microtubule organizing center. It localises to the centrosome. It is found in the centriole. The protein resides in the spindle. Centriole-enriched microtubule-binding protein involved in centriole biogenesis. Essential for the generation of the distal portion of new-born centrioles in a CPAP- and CEP120-mediated elongation dependent manner during the cell cycle S/G2 phase after formation of the initiating cartwheel structure. Required for the recruitment of centriolar proteins, such as POC1B, POC5 and CEP135, into the distal portion of centrioles. Also required for centriole-to-centrosome conversion during mitotic progression, but is dispensable for cartwheel removal or centriole disengagement. Binds to and stabilizes centriolar microtubule. May be involved in ciliogenesis. The sequence is that of Centrosomal protein of 295 kDa from Mus musculus (Mouse).